Reading from the N-terminus, the 101-residue chain is NAD(P)H-quinone oxidoreductase subunit 4L, chloroplastic (101 aa).

The next 3 helical transmembrane spans lie at 2–22, 32–52, and 61–81; these read LLEH…YGLI, MCLE…SDFF, and IFSI…SAIV.

The protein belongs to the complex I subunit 4L family. As to quaternary structure, NDH is composed of at least 16 different subunits, 5 of which are encoded in the nucleus.

Its subcellular location is the plastid. It localises to the chloroplast thylakoid membrane. The catalysed reaction is a plastoquinone + NADH + (n+1) H(+)(in) = a plastoquinol + NAD(+) + n H(+)(out). It carries out the reaction a plastoquinone + NADPH + (n+1) H(+)(in) = a plastoquinol + NADP(+) + n H(+)(out). Its function is as follows. NDH shuttles electrons from NAD(P)H:plastoquinone, via FMN and iron-sulfur (Fe-S) centers, to quinones in the photosynthetic chain and possibly in a chloroplast respiratory chain. The immediate electron acceptor for the enzyme in this species is believed to be plastoquinone. Couples the redox reaction to proton translocation, and thus conserves the redox energy in a proton gradient. The protein is NAD(P)H-quinone oxidoreductase subunit 4L, chloroplastic of Carica papaya (Papaya).